The primary structure comprises 210 residues: Ribonuclease HII (210 aa).

The RNase H type-2 domain occupies 18 to 208; sequence YPVAGIDEAG…VNDIISQTKL (191 aa). Residues Asp24, Glu25, and Asp116 each contribute to the a divalent metal cation site.

It belongs to the RNase HII family. It depends on Mn(2+) as a cofactor. Requires Mg(2+) as cofactor.

The protein localises to the cytoplasm. It catalyses the reaction Endonucleolytic cleavage to 5'-phosphomonoester.. Functionally, endonuclease that specifically degrades the RNA of RNA-DNA hybrids. In Endomicrobium trichonymphae, this protein is Ribonuclease HII.